The primary structure comprises 376 residues: Glutamate 5-kinase (376 aa).

An ATP-binding site is contributed by Lys-23. Residues Ser-63, Asp-150, and Asn-162 each coordinate substrate. ATP is bound by residues 182-183 (SD) and 222-228 (TGGMASK). Positions 284-358 (GGALRIDAGA…GKQTAQLPEG (75 aa)) constitute a PUA domain.

Belongs to the glutamate 5-kinase family.

The protein localises to the cytoplasm. The catalysed reaction is L-glutamate + ATP = L-glutamyl 5-phosphate + ADP. The protein operates within amino-acid biosynthesis; L-proline biosynthesis; L-glutamate 5-semialdehyde from L-glutamate: step 1/2. In terms of biological role, catalyzes the transfer of a phosphate group to glutamate to form L-glutamate 5-phosphate. The polypeptide is Glutamate 5-kinase (Corynebacterium diphtheriae (strain ATCC 700971 / NCTC 13129 / Biotype gravis)).